Consider the following 351-residue polypeptide: UDP-3-O-acylglucosamine N-acyltransferase (351 aa).

His240 (proton acceptor) is an active-site residue.

Belongs to the transferase hexapeptide repeat family. LpxD subfamily. In terms of assembly, homotrimer.

The catalysed reaction is a UDP-3-O-[(3R)-3-hydroxyacyl]-alpha-D-glucosamine + a (3R)-hydroxyacyl-[ACP] = a UDP-2-N,3-O-bis[(3R)-3-hydroxyacyl]-alpha-D-glucosamine + holo-[ACP] + H(+). It functions in the pathway bacterial outer membrane biogenesis; LPS lipid A biosynthesis. Functionally, catalyzes the N-acylation of UDP-3-O-acylglucosamine using 3-hydroxyacyl-ACP as the acyl donor. Is involved in the biosynthesis of lipid A, a phosphorylated glycolipid that anchors the lipopolysaccharide to the outer membrane of the cell. The protein is UDP-3-O-acylglucosamine N-acyltransferase of Pseudomonas fluorescens (strain Pf0-1).